The sequence spans 838 residues: Leucine--tRNA ligase (838 aa).

Positions 36-46 (PYPSGKIHMGH) match the 'HIGH' region motif. The 'KMSKS' region signature appears at 611 to 615 (KMSKS). K614 contacts ATP.

It belongs to the class-I aminoacyl-tRNA synthetase family.

Its subcellular location is the cytoplasm. It catalyses the reaction tRNA(Leu) + L-leucine + ATP = L-leucyl-tRNA(Leu) + AMP + diphosphate. This is Leucine--tRNA ligase from Wolbachia pipientis wMel.